A 43-amino-acid polypeptide reads, in one-letter code: uncharacterized protein (43 aa).

A disordered region spans residues 1-43 (MFKSRIETGGFQFQVHGDDESAMDDEFIDDDDDQQVVEPVTDN). Acidic residues predominate over residues 20–35 (ESAMDDEFIDDDDDQQ).

This is an uncharacterized protein from Dictyostelium discoideum (Social amoeba).